The chain runs to 508 residues: Ell-associated factor Eaf (508 aa).

2 stretches are compositionally biased toward polar residues: residues 140–150 and 161–190; these read GQGQLHSQGAN and GHST…SRRN. Disordered regions lie at residues 140–226 and 251–508; these read GQGQ…WDAN and HNSG…DDDE. Position 200 is a phosphoserine (Ser200). The segment covering 251–268 has biased composition (low complexity); sequence HNSGHANTSGSSTGSATG. Composition is skewed to polar residues over residues 272-281 and 296-313; these read FGSTSSSSHM and QQMQ…QQPS. Residues 314-341 are compositionally biased toward low complexity; the sequence is NYGRGYNGGHNHVQQQQQRNSPQQQRPP. Acidic residues predominate over residues 391 to 406; that stretch reads DSSDSDSGSDSDDSTE. Composition is skewed to low complexity over residues 412–444, 461–477, and 489–502; these read QGQQ…HLNQ, HQHQ…QKQQ, and NDLL…SSNS.

It belongs to the EAF family.

The protein resides in the nucleus. Promotes transcriptional elongation by Su(Tpl)/ELL. Essential for development. The chain is Ell-associated factor Eaf from Drosophila erecta (Fruit fly).